The sequence spans 581 residues: Laccase-2 (581 aa).

Positions 1-19 are cleaved as a signal peptide; that stretch reads MKYSTVFTALTALFAQASA. Plastocyanin-like domains follow at residues 74–191 and 197–353; these read SVEN…GPAT and DVGA…YDSS. 3 N-linked (GlcNAc...) asparagine glycosylation sites follow: N77, N93, and N120. Residues H125, H127, H169, and H171 each contribute to the Cu cation site. C146 and C562 are joined by a disulfide. 6 N-linked (GlcNAc...) asparagine glycosylation sites follow: N232, N283, N343, N408, N427, and N441. In terms of domain architecture, Plastocyanin-like 3 spans 413–547; the sequence is LLDWSSPTTL…AMQFVESQSS (135 aa). The Cu cation site is built by H464, H467, H469, H526, C527, H528, and H532.

The protein belongs to the multicopper oxidase family. It depends on Cu cation as a cofactor.

The protein localises to the secreted. It carries out the reaction 4 hydroquinone + O2 = 4 benzosemiquinone + 2 H2O. In terms of biological role, lignin degradation and detoxification of lignin-derived products. This is Laccase-2 (lcc2) from Botryotinia fuckeliana (Noble rot fungus).